Here is a 537-residue protein sequence, read N- to C-terminus: Sodium/hydrogen exchanger 9B2 (537 aa).

A compositionally biased stretch (basic and acidic residues) spans M1–Y10. Residues M1 to E28 are disordered. Over M1 to R86 the chain is Cytoplasmic. Polar residues predominate over residues P15 to Q27. Position 49 is a phosphoserine (S49). The helical transmembrane segment at V87–I104 threads the bilayer. Over T105–G113 the chain is Extracellular. A helical membrane pass occupies residues N114–G133. The Cytoplasmic segment spans residues L134 to P144. Residues S145 to V161 traverse the membrane as a helical segment. The Extracellular portion of the chain corresponds to I162 to K171. The helical transmembrane segment at W172 to G189 threads the bilayer. Residues L190–L200 are Cytoplasmic-facing. Residues K201–L227 traverse the membrane as a helical segment. Topologically, residues G228 to W233 are extracellular. A helical transmembrane segment spans residues G234 to G242. Topologically, residues A243–L270 are cytoplasmic. Residues V244, G275, D278, and D279 each coordinate Na(+). A helical membrane pass occupies residues L271–L290. Residues G291–V300 lie on the Extracellular side of the membrane. A helical transmembrane segment spans residues F301 to I324. Residues Q325–R339 are Cytoplasmic-facing. The helical transmembrane segment at T340–F357 threads the bilayer. The Extracellular portion of the chain corresponds to G358–G361. The chain crosses the membrane as a helical span at residues S362–L373. The Cytoplasmic segment spans residues A374–A390. Residues V391–A411 form a helical membrane-spanning segment. Residues S412–T417 lie on the Extracellular side of the membrane. The chain crosses the membrane as a helical span at residues V418–V440. Topologically, residues C441–A461 are cytoplasmic. A helical membrane pass occupies residues T462–D473. Residues T474–Y486 are Extracellular-facing. Residues G487 to I509 form a helical membrane-spanning segment. Over G510–V537 the chain is Cytoplasmic.

Belongs to the monovalent cation:proton antiporter 1 (CPA1) transporter (TC 2.A.36) family. As to quaternary structure, homodimer. Dimerization is essential for SLC9B2 activity. Lipids seem to play a role in the stabilization of the dimerization subdomain. In terms of tissue distribution, widely expressed. High levels detected in the distal tubules of the kidney nephron. Detected in red blood cells (at protein level).

It is found in the cell membrane. The protein localises to the mitochondrion membrane. The protein resides in the endosome membrane. It localises to the recycling endosome membrane. Its subcellular location is the cytoplasmic vesicle. It is found in the secretory vesicle. The protein localises to the synaptic vesicle membrane. The protein resides in the cell projection. It localises to the cilium. Its subcellular location is the flagellum membrane. It is found in the basolateral cell membrane. The protein localises to the apical cell membrane. It catalyses the reaction Li(+)(out) + H(+)(in) = Li(+)(in) + H(+)(out). The catalysed reaction is Li(+)(in) + Na(+)(out) = Li(+)(out) + Na(+)(in). The enzyme catalyses Na(+)(in) + H(+)(out) = Na(+)(out) + H(+)(in). With respect to regulation, allosterically inhibited by the N-terminal domain. Inhibited by phloretin. Functionally, electroneutral Na(+) Li(+)/H(+) antiporter that extrudes Na(+) or Li(+) in exchange for external protons across the membrane. Uses the proton gradient/membrane potential to extrude sodium. Contributes to the regulation of intracellular pH and sodium homeostasis. Also able to mediate Na(+)/Li(+) antiporter activity in kidney. May play a physiological role in renal tubular function and blood pressure homeostasis. Plays an important role for insulin secretion and clathrin-mediated endocytosis in beta-cells. Involved in sperm motility and fertility. It is controversial whether SLC9B2 plays a role in osteoclast differentiation or not. The sequence is that of Sodium/hydrogen exchanger 9B2 from Homo sapiens (Human).